Here is a 345-residue protein sequence, read N- to C-terminus: Adenine deaminase (345 aa).

Positions 20, 22, and 204 each coordinate Zn(2+). The active-site Proton donor is the Glu-207. Asp-285 is a binding site for Zn(2+). Asp-286 contributes to the substrate binding site.

Belongs to the metallo-dependent hydrolases superfamily. Adenosine and AMP deaminases family. Adenine deaminase type 2 subfamily. Zn(2+) is required as a cofactor.

The catalysed reaction is adenine + H2O + H(+) = hypoxanthine + NH4(+). Functionally, catalyzes the hydrolytic deamination of adenine to hypoxanthine. Plays an important role in the purine salvage pathway and in nitrogen catabolism. The protein is Adenine deaminase of Ralstonia nicotianae (strain ATCC BAA-1114 / GMI1000) (Ralstonia solanacearum).